Here is a 518-residue protein sequence, read N- to C-terminus: Arginyl-tRNA--protein transferase 1 (518 aa).

The segment covering 149-165 (ESLQSEGKNSKKEEPHE) has biased composition (basic and acidic residues). The tract at residues 149–207 (ESLQSEGKNSKKEEPHELLQSQDSVGEKLGSGEPSHSVKVHTVPKPGKGADLSKPPCRK) is disordered. At Ser-169 the chain carries Phosphoserine.

The protein belongs to the R-transferase family. In terms of assembly, monomer. Interacts with LIAT1; LIAT1 is not a substrate of ATE1, the interaction takes place in the cytoplasm and seems to increase ATE1 arginyltransferase activity.

It is found in the nucleus. The protein localises to the cytoplasm. It carries out the reaction an N-terminal L-alpha-aminoacyl-[protein] + L-arginyl-tRNA(Arg) = an N-terminal L-arginyl-L-aminoacyl-[protein] + tRNA(Arg) + H(+). In terms of biological role, involved in the post-translational conjugation of arginine to the N-terminal aspartate or glutamate of a protein. This arginylation is required for degradation of the protein via the ubiquitin pathway. Does not arginylate cysteine residues. This chain is Arginyl-tRNA--protein transferase 1 (ATE1), found in Macaca fascicularis (Crab-eating macaque).